The sequence spans 473 residues: Pre-mRNA-splicing factor prp5 (473 aa).

WD repeat units lie at residues 161–191, 203–233, 245–275, 287–317, 329–358, 370–399, and 419–449; these read GHLG…KIWD, GHIA…KCWD, GHLS…RVWD, GHKS…RLWD, HHKK…KHWK, GHNA…CFWD, and DSEA…KIYK.

Belongs to the WD repeat PRL1/PRL2 family. In terms of assembly, belongs to the 40S cdc5-associated complex (or cwf complex), a spliceosome sub-complex reminiscent of a late-stage spliceosome composed of the U2, U5 and U6 snRNAs and at least brr2, cdc5, cwf2/prp3, cwf3/syf1, cwf4/syf3, cwf5/ecm2, spp42/cwf6, cwf7/spf27, cwf8, cwf9, cwf10, cwf11, cwf12, prp45/cwf13, cwf14, cwf15, cwf16, cwf17, cwf18, cwf19, cwf20, cwf21, cwf22, cwf23, cwf24, cwf25, cwf26, cyp7/cwf27, cwf28, cwf29/ist3, lea1, msl1, prp5/cwf1, prp10, prp12/sap130, prp17, prp22, sap61, sap62, sap114, sap145, slu7, smb1, smd1, smd3, smf1, smg1 and syf2.

The protein resides in the nucleus. Its function is as follows. Required for both cell cycle progression at G2/M and pre-mRNA splicing. Interacts genetically with the PRP4 kinase. In Schizosaccharomyces pombe (strain 972 / ATCC 24843) (Fission yeast), this protein is Pre-mRNA-splicing factor prp5 (prp5).